A 298-amino-acid chain; its full sequence is tRNA U34 carboxymethyltransferase (298 aa).

Carboxy-S-adenosyl-L-methionine is bound by residues Lys69, Trp83, Lys88, Gly107, 129-131 (DPS), 156-157 (VE), Tyr176, and Arg291.

It belongs to the class I-like SAM-binding methyltransferase superfamily. CmoB family. Homotetramer.

The catalysed reaction is carboxy-S-adenosyl-L-methionine + 5-hydroxyuridine(34) in tRNA = 5-carboxymethoxyuridine(34) in tRNA + S-adenosyl-L-homocysteine + H(+). Catalyzes carboxymethyl transfer from carboxy-S-adenosyl-L-methionine (Cx-SAM) to 5-hydroxyuridine (ho5U) to form 5-carboxymethoxyuridine (cmo5U) at position 34 in tRNAs. The chain is tRNA U34 carboxymethyltransferase from Campylobacter curvus (strain 525.92).